The sequence spans 709 residues: Protein white (709 aa).

The interval 1–35 is disordered; it reads MTINTDDQYADGESKTTISSNRRYSTSSFQDQSME. Polar residues predominate over residues 15-32; sequence KTTISSNRRYSTSSFQDQ. Positions 103 to 348 constitute an ABC transporter domain; it reads FTRQRLVKDF…SQLGIPCPPN (246 aa). Residues 136-143 and 292-299 contribute to the ATP site; these read GSSGAGKT and GMAMKGKT. A helical transmembrane segment spans residues 457–475; the sequence is LLQTAMVASLIGSIYFGQV. Residue asparagine 485 is glycosylated (N-linked (GlcNAc...) asparagine). A run of 4 helical transmembrane segments spans residues 487–507, 537–555, 564–585, and 598–616; these read SLFL…INVF, LPLF…YPMI, YLTT…GYLI, and VGPP…FLNS. An N-linked (GlcNAc...) asparagine glycan is attached at asparagine 658. A helical membrane pass occupies residues 681–700; it reads LDIGCLFALIVLFRLGALFC.

The protein belongs to the ABC transporter superfamily. ABCG family. Eye pigment precursor importer (TC 3.A.1.204) subfamily.

Its subcellular location is the membrane. Functionally, may be part of a membrane-spanning permease system necessary for the transport of pigment precursors into pigment cells responsible for eye color. The chain is Protein white (W) from Anopheles albimanus (New world malaria mosquito).